We begin with the raw amino-acid sequence, 689 residues long: Armadillo-like helical domain-containing protein 3 (689 aa).

Residues 520–538 (IFTLTLMVVNLFNMFITYG) traverse the membrane as a helical segment.

This sequence belongs to the ARMH3 family.

It localises to the golgi apparatus membrane. Its subcellular location is the cytoplasm. May be involved in Golgi maintenance and protein secretion. This Xenopus laevis (African clawed frog) protein is Armadillo-like helical domain-containing protein 3.